Consider the following 555-residue polypeptide: Formate--tetrahydrofolate ligase (555 aa).

65 to 72 serves as a coordination point for ATP; it reads TPAGEGKS.

This sequence belongs to the formate--tetrahydrofolate ligase family.

It carries out the reaction (6S)-5,6,7,8-tetrahydrofolate + formate + ATP = (6R)-10-formyltetrahydrofolate + ADP + phosphate. Its pathway is one-carbon metabolism; tetrahydrofolate interconversion. The protein is Formate--tetrahydrofolate ligase of Staphylococcus epidermidis (strain ATCC 35984 / DSM 28319 / BCRC 17069 / CCUG 31568 / BM 3577 / RP62A).